A 239-amino-acid chain; its full sequence is 7-cyano-7-deazaguanine synthase (239 aa).

Position 7–17 (7–17) interacts with ATP; it reads LSGGIDSSTLL. The Zn(2+) site is built by Cys-184, Cys-192, Cys-195, and Cys-198.

This sequence belongs to the QueC family. Zn(2+) serves as cofactor.

The catalysed reaction is 7-carboxy-7-deazaguanine + NH4(+) + ATP = 7-cyano-7-deazaguanine + ADP + phosphate + H2O + H(+). It participates in purine metabolism; 7-cyano-7-deazaguanine biosynthesis. Functionally, catalyzes the ATP-dependent conversion of 7-carboxy-7-deazaguanine (CDG) to 7-cyano-7-deazaguanine (preQ(0)). This chain is 7-cyano-7-deazaguanine synthase, found in Archaeoglobus fulgidus (strain ATCC 49558 / DSM 4304 / JCM 9628 / NBRC 100126 / VC-16).